Consider the following 412-residue polypeptide: NADH-quinone oxidoreductase subunit D (412 aa).

The protein belongs to the complex I 49 kDa subunit family. As to quaternary structure, NDH-1 is composed of 14 different subunits. Subunits NuoB, C, D, E, F, and G constitute the peripheral sector of the complex.

It localises to the cell inner membrane. The catalysed reaction is a quinone + NADH + 5 H(+)(in) = a quinol + NAD(+) + 4 H(+)(out). In terms of biological role, NDH-1 shuttles electrons from NADH, via FMN and iron-sulfur (Fe-S) centers, to quinones in the respiratory chain. The immediate electron acceptor for the enzyme in this species is believed to be a menaquinone. Couples the redox reaction to proton translocation (for every two electrons transferred, four hydrogen ions are translocated across the cytoplasmic membrane), and thus conserves the redox energy in a proton gradient. This is NADH-quinone oxidoreductase subunit D from Flavobacterium psychrophilum (strain ATCC 49511 / DSM 21280 / CIP 103535 / JIP02/86).